Here is a 198-residue protein sequence, read N- to C-terminus: Molybdenum cofactor guanylyltransferase (198 aa).

Residues Leu-14–Gly-16, Lys-27, Asp-73, and Asp-103 contribute to the GTP site. Residue Asp-103 participates in Mg(2+) binding.

This sequence belongs to the MobA family. Monomer. Mg(2+) serves as cofactor.

Its subcellular location is the cytoplasm. The enzyme catalyses Mo-molybdopterin + GTP + H(+) = Mo-molybdopterin guanine dinucleotide + diphosphate. In terms of biological role, transfers a GMP moiety from GTP to Mo-molybdopterin (Mo-MPT) cofactor (Moco or molybdenum cofactor) to form Mo-molybdopterin guanine dinucleotide (Mo-MGD) cofactor. The chain is Molybdenum cofactor guanylyltransferase from Pseudomonas paraeruginosa (strain DSM 24068 / PA7) (Pseudomonas aeruginosa (strain PA7)).